The chain runs to 914 residues: Thyroid peroxidase (914 aa).

An N-terminal signal peptide occupies residues M1–G31. At G32 to R834 the chain is on the extracellular side. A glycan (N-linked (GlcNAc...) asparagine) is linked at N123. Residues C136 and C152 are joined by a disulfide bond. D232 contacts heme b. H233 serves as the catalytic Proton acceptor. D234 is a Ca(2+) binding site. 2 disulfides stabilise this stretch: C253–C263 and C257–C278. N271 and N299 each carry an N-linked (GlcNAc...) asparagine glycan. Residues T313, F315, D317, and S319 each contribute to the Ca(2+) site. The N-linked (GlcNAc...) asparagine glycan is linked to N334. Heme b contacts are provided by E387 and H482. 7 disulfide bridges follow: C586–C643, C684–C709, C730–C770, C756–C782, C788–C802, C796–C811, and C813–C826. An N-linked (GlcNAc...) asparagine glycan is attached at N603. A Sushi domain is found at D728–K783. Positions D784–I827 constitute an EGF-like; calcium-binding domain. A helical membrane pass occupies residues A835–C859. At R860–E914 the chain is on the cytoplasmic side. The tract at residues F882–G907 is disordered.

It belongs to the peroxidase family. XPO subfamily. Interacts with DUOX1, DUOX2 and CYBA. Ca(2+) is required as a cofactor. Heme b serves as cofactor. Heme is covalently bound through a H(2)O(2)-dependent autocatalytic process. Heme insertion is important for the delivery of protein at the cell surface. In terms of processing, cleaved in its N-terminal part.

The protein localises to the membrane. The enzyme catalyses 2 iodide + H2O2 + 2 H(+) = diiodine + 2 H2O. It catalyses the reaction [thyroglobulin]-L-tyrosine + iodide + H2O2 + H(+) = [thyroglobulin]-3-iodo-L-tyrosine + 2 H2O. It carries out the reaction [thyroglobulin]-3-iodo-L-tyrosine + iodide + H2O2 + H(+) = [thyroglobulin]-3,5-diiodo-L-tyrosine + 2 H2O. The catalysed reaction is 2 [thyroglobulin]-3,5-diiodo-L-tyrosine + H2O2 = [thyroglobulin]-L-thyroxine + [thyroglobulin]-dehydroalanine + 2 H2O. The enzyme catalyses [thyroglobulin]-3-iodo-L-tyrosine + [thyroglobulin]-3,5-diiodo-L-tyrosine + H2O2 = [thyroglobulin]-3,3',5-triiodo-L-thyronine + [thyroglobulin]-dehydroalanine + 2 H2O. It participates in hormone biosynthesis; thyroid hormone biosynthesis. Functionally, iodination and coupling of the hormonogenic tyrosines in thyroglobulin to yield the thyroid hormones T(3) and T(4). The sequence is that of Thyroid peroxidase (Tpo) from Rattus norvegicus (Rat).